Here is a 473-residue protein sequence, read N- to C-terminus: Photosystem II CP43 reaction center protein (473 aa).

A propeptide spanning residues Met-1 to Glu-14 is cleaved from the precursor. 5 helical membrane-spanning segments follow: residues Leu-69–Ala-93, Leu-134–Asn-155, Lys-178–Asn-200, Lys-255–Ser-275, and Trp-291–Ala-312. Residue Glu-367 coordinates [CaMn4O5] cluster. A helical membrane pass occupies residues Arg-447 to Leu-471.

The protein belongs to the PsbB/PsbC family. PsbC subfamily. In terms of assembly, PSII is composed of 1 copy each of membrane proteins PsbA, PsbB, PsbC, PsbD, PsbE, PsbF, PsbH, PsbI, PsbJ, PsbK, PsbL, PsbM, PsbT, PsbY, PsbZ, Psb30/Ycf12, at least 3 peripheral proteins of the oxygen-evolving complex and a large number of cofactors. It forms dimeric complexes. The cofactor is Binds multiple chlorophylls and provides some of the ligands for the Ca-4Mn-5O cluster of the oxygen-evolving complex. It may also provide a ligand for a Cl- that is required for oxygen evolution. PSII binds additional chlorophylls, carotenoids and specific lipids..

Its subcellular location is the plastid. It is found in the chloroplast thylakoid membrane. One of the components of the core complex of photosystem II (PSII). It binds chlorophyll and helps catalyze the primary light-induced photochemical processes of PSII. PSII is a light-driven water:plastoquinone oxidoreductase, using light energy to abstract electrons from H(2)O, generating O(2) and a proton gradient subsequently used for ATP formation. In Galdieria sulphuraria (Red alga), this protein is Photosystem II CP43 reaction center protein.